The following is a 1023-amino-acid chain: FHIP family protein AGAP011705 (1023 aa).

3 stretches are compositionally biased toward polar residues: residues 1 to 13 (MSWL…RQSF), 806 to 825 (SMTS…SSSY), and 868 to 888 (GLNH…ASMN). Disordered regions lie at residues 1 to 39 (MSWL…AGGG) and 797 to 927 (GKLL…AETQ). A compositionally biased stretch (low complexity) spans 889-906 (VPSPVGQQQHQHQSVSSV).

It belongs to the FHIP family.

The protein is FHIP family protein AGAP011705 of Anopheles gambiae (African malaria mosquito).